The following is a 447-amino-acid chain: Phosphoglucosamine mutase (447 aa).

Serine 102 serves as the catalytic Phosphoserine intermediate. 4 residues coordinate Mg(2+): serine 102, aspartate 241, aspartate 243, and aspartate 245. Serine 102 is subject to Phosphoserine.

It belongs to the phosphohexose mutase family. Mg(2+) serves as cofactor. In terms of processing, activated by phosphorylation.

The enzyme catalyses alpha-D-glucosamine 1-phosphate = D-glucosamine 6-phosphate. Catalyzes the conversion of glucosamine-6-phosphate to glucosamine-1-phosphate. This Ruegeria sp. (strain TM1040) (Silicibacter sp.) protein is Phosphoglucosamine mutase.